The sequence spans 5911 residues: Nonribosomal peptide synthetase 30 (5911 aa).

Residues 1-22 (MVPEKPTAQSKSGIGEPFRAGD) form a disordered region. An adenylation 1 region spans residues 352 to 754 (ALIQPSSTAV…GRKDAQVKIR (403 aa)). The 78-residue stretch at 891-968 (PRPFSVEYSL…EAAAIVARGT (78 aa)) folds into the Carrier 1 domain. Ser928 carries the O-(pantetheine 4'-phosphoryl)serine modification. Positions 1007-1422 (EDAFPCTPLQ…ERLIFVIDQL (416 aa)) are condensation 1. The tract at residues 1467–1865 (ERALSQPDRP…SLMFVGRKAD (399 aa)) is adenylation 2. Residues 2001–2077 (QPTSELEAEM…NICSHSYYCS (77 aa)) form the Carrier 2 domain. Ser2038 carries the post-translational modification O-(pantetheine 4'-phosphoryl)serine. Positions 2121 to 2538 (QDAYPCTPLQ…GPDINMSDIG (418 aa)) are condensation 2. Positions 2568–2977 (EEQARLRPEA…GRKDSQVKIR (410 aa)) are adenylation 3. The 77-residue stretch at 3110–3186 (QPSTNAQREL…LIADNSKSIK (77 aa)) folds into the Carrier 3 domain. O-(pantetheine 4'-phosphoryl)serine is present on Ser3147. Positions 3227 to 3652 (VQDAYPCTPL…LELVIQAFMA (426 aa)) are condensation 3. The adenylation 4 stretch occupies residues 3701–4108 (EERVREQPNA…GRKDSQVKIR (408 aa)). The Carrier 4 domain maps to 4248–4325 (PPTTPLECQM…DIIATMTKNK (78 aa)). Residue Ser4285 is modified to O-(pantetheine 4'-phosphoryl)serine. Residues 4326–4347 (ATGASRRLPRDDDEPIPHTKYA) form a disordered region. The tract at residues 4353 to 4793 (SYAQGRLWFL…SLPLLTEDGR (441 aa)) is condensation 4. Residues 4819-5231 (FKEQVSRHPN…GRMDVQVKIR (413 aa)) are adenylation 5. The region spanning 5360 to 5436 (KPTTDMEVAL…ALARRQEEIV (77 aa)) is the Carrier 5 domain. At Ser5397 the chain carries O-(pantetheine 4'-phosphoryl)serine. Residues 5474 to 5828 (VEDMLPLTSM…GIKMKLHFFT (355 aa)) are condensation 5.

The protein belongs to the NRP synthetase family.

It functions in the pathway secondary metabolite biosynthesis. In terms of biological role, nonribosomal peptide synthetase; part of the gene cluster that mediates the biosynthesis of sansalvamide, a cyclic pentadepsipeptide that shows promising results as potential anti-cancer drug. The nonribosmal peptide synthetase NRPS30 produces sansalvamide by incorporating successively one phenylalanine, one leucine, one alpha-hydroxyisocaproic acid (HICA), one valine and one leucine before sansalvamide is released from by cyclization by the terminal C domain of NRPS30. The HICA residue is probably provided by reduction of alpha-ketoisocaproate by the cluster-specific aldo-keto reductase (NECHADRAFT_45914). In Fusarium vanettenii (strain ATCC MYA-4622 / CBS 123669 / FGSC 9596 / NRRL 45880 / 77-13-4) (Fusarium solani subsp. pisi), this protein is Nonribosomal peptide synthetase 30.